Consider the following 447-residue polypeptide: Phosphoglucosamine mutase (447 aa).

Ser-103 functions as the Phosphoserine intermediate in the catalytic mechanism. Residues Ser-103, Asp-242, Asp-244, and Asp-246 each coordinate Mg(2+). A Phosphoserine modification is found at Ser-103.

This sequence belongs to the phosphohexose mutase family. Mg(2+) serves as cofactor. In terms of processing, activated by phosphorylation.

It catalyses the reaction alpha-D-glucosamine 1-phosphate = D-glucosamine 6-phosphate. In terms of biological role, catalyzes the conversion of glucosamine-6-phosphate to glucosamine-1-phosphate. In Dinoroseobacter shibae (strain DSM 16493 / NCIMB 14021 / DFL 12), this protein is Phosphoglucosamine mutase.